The chain runs to 144 residues: Maximins 7/H6 (144 aa).

Positions 1 to 18 (MNFKYIVAVSFLIASAYA) are cleaved as a signal peptide. Positions 19–43 (RSEENDEQSLSQRDILEEESLREIR) are excised as a propeptide. The residue at position 70 (asparagine 70) is an Asparagine amide. Residues 74 to 123 (TAEDHEVMKRLEAVMRDLDSLDYPEEAAERETRGFNQEEIANLFTKKEKR) constitute a propeptide that is removed on maturation. Leucine 143 bears the Leucine amide mark.

It belongs to the bombinin family. In terms of tissue distribution, expressed by the skin glands.

Its subcellular location is the secreted. Its function is as follows. Maximin-7 shows antimicrobial activity against bacteria and against the fungus C.albicans. It has little hemolytic activity. Functionally, maximin-H6 shows antimicrobial activity against bacteria and against the fungus C.albicans. Shows strong hemolytic activity. The sequence is that of Maximins 7/H6 from Bombina maxima (Giant fire-bellied toad).